The primary structure comprises 534 residues: Pentatricopeptide repeat-containing protein At1g07590, mitochondrial (534 aa).

A mitochondrion-targeting transit peptide spans 1-20 (MRSIIALMRQREYFVQAIRR). PPR repeat units follow at residues 165 to 199 (NELL…GYRT), 200 to 234 (SHLV…KATP), 235 to 269 (HVST…GVEP), 270 to 300 (NEVS…IEKS), 305 to 335 (NWST…IRGF), 339 to 369 (RSKS…MKNV), 374 to 408 (ETEQ…GFKP), 409 to 443 (NSIT…KTSK), and 451 to 485 (WLET…KYNR).

Belongs to the PPR family. P subfamily.

It localises to the mitochondrion. This chain is Pentatricopeptide repeat-containing protein At1g07590, mitochondrial, found in Arabidopsis thaliana (Mouse-ear cress).